The chain runs to 736 residues: MASHSDTLVVFFGATAGANGGKLGSDERELILLVWQIVDLHENKVGKLHRTLVQPDSVDLSEQCKEETGLTAEELCKAEPLESVLQQFHQSVSAELKSLGRSSYTLCVDGPLLIRQVLHPEASKKNLVLPECFYTFVDLKKEFHKCCPNAGPVKDLTLLSMLDYVCIQATVEQEAGLREVKDMVLLILHVLADPYNHKFSAFETVNYKFESGACSKTEAVDSETVIRARGLPWQSSDQDIARFFKGLNIAKGGVALCLNAQGRRNGEALVRFINSEHRDMALDRHKHHMGSRYIEVYKATGEEFLKIAGGTSNEVAQFLSKENQMIIRMRGLPFTATPQDVLGFLGPECPVTDGTEGLLFVKYPDGRPTGDAFVLFACEEYAQNALKKHKQILGKRYIELFRSTAAEVQQVLNRYMSTPLISTLPPPPPPMVSVPVLATPPFITTGNTRDCIRLRGLPYTAAIEDILEFMGEHTIDIKPHGVHMVLNQQGRPSGDAFIQMKSADRAFMVAQKCHKKMMKDRYVEVFQCSTEEMSFVLMGGTLNRSGLSPPPCKLPCLSPPTYAAFPAAPAMLPTEAALYQPPLLATPRTPQAPTHSPAPAFAYYSPQLYMNMNMSYTTYYPSPPVSPSTVSYFAAPPGSVAAAVAAQPTPAILPPQPGALVRMQGLPYNAGVKDILSFFQGYQLQADSVLVLYNWSGQRSGEALVTFPSEKAARRAVAECSNIPLSGHPIHLACCE.

RRM domains follow at residues 224-301, 325-405, and 659-736; these read TVIR…KATG, MIIR…RSTA, and ALVR…ACCE.

Belongs to the ESRP family.

The protein localises to the nucleus. Functionally, mRNA splicing factor that regulates the formation of epithelial cell-specific isoforms. Specifically regulates the expression of FGFR2-IIIb, an epithelial cell-specific isoform of fgfr2. Acts by directly binding specific sequences in mRNAs. Binds the GU-rich sequence motifs in the ISE/ISS-3, a cis-element regulatory region present in the mRNA of fgfr2. The polypeptide is Epithelial splicing regulatory protein 2 (esrp2) (Danio rerio (Zebrafish)).